Reading from the N-terminus, the 204-residue chain is Ribosome maturation factor RimP (204 aa).

The protein belongs to the RimP family.

It is found in the cytoplasm. Its function is as follows. Required for maturation of 30S ribosomal subunits. This chain is Ribosome maturation factor RimP, found in Allorhizobium ampelinum (strain ATCC BAA-846 / DSM 112012 / S4) (Agrobacterium vitis (strain S4)).